A 397-amino-acid polypeptide reads, in one-letter code: S-adenosylmethionine synthase (397 aa).

Residue histidine 15 participates in ATP binding. A Mg(2+)-binding site is contributed by aspartate 17. Glutamate 43 is a binding site for K(+). Residues glutamate 56 and glutamine 99 each coordinate L-methionine. The interval 99–109 is flexible loop; that stretch reads QSPDIAMGVNK. ATP is bound by residues 175–177, 241–242, aspartate 250, 256–257, alanine 273, and lysine 277; these read DGK, RF, and RK. Aspartate 250 provides a ligand contact to L-methionine. L-methionine is bound at residue lysine 281.

It belongs to the AdoMet synthase family. Homotetramer; dimer of dimers. The cofactor is Mg(2+). It depends on K(+) as a cofactor.

It is found in the cytoplasm. The catalysed reaction is L-methionine + ATP + H2O = S-adenosyl-L-methionine + phosphate + diphosphate. Its pathway is amino-acid biosynthesis; S-adenosyl-L-methionine biosynthesis; S-adenosyl-L-methionine from L-methionine: step 1/1. In terms of biological role, catalyzes the formation of S-adenosylmethionine (AdoMet) from methionine and ATP. The overall synthetic reaction is composed of two sequential steps, AdoMet formation and the subsequent tripolyphosphate hydrolysis which occurs prior to release of AdoMet from the enzyme. This chain is S-adenosylmethionine synthase, found in Acetivibrio thermocellus (strain ATCC 27405 / DSM 1237 / JCM 9322 / NBRC 103400 / NCIMB 10682 / NRRL B-4536 / VPI 7372) (Clostridium thermocellum).